The primary structure comprises 487 residues: Serine/threonine-protein kinase 4 (487 aa).

At M1 the chain carries N-acetylmethionine. Position 3 is a phosphothreonine (T3). A Protein kinase domain is found at F30–V281. ATP contacts are provided by residues L36–V44 and K59. The active-site Proton acceptor is the D149. T183 is subject to Phosphothreonine; by autocatalysis. Phosphoserine is present on S265. A coiled-coil region spans residues L290–R310. A compositionally biased stretch (basic and acidic residues) spans K303–V312. The disordered stretch occupies residues K303–R332. Residues D313–D326 are compositionally biased toward acidic residues. Residue S320 is modified to Phosphoserine. Residues T340 and T367 each carry the phosphothreonine modification. T387 bears the Phosphothreonine; by PKB/AKT1 mark. 2 positions are modified to phosphoserine: S410 and S414. The residue at position 433 (Y433) is a Phosphotyrosine. In terms of domain architecture, SARAH spans Y433–K480.

This sequence belongs to the protein kinase superfamily. STE Ser/Thr protein kinase family. STE20 subfamily. In terms of assembly, homodimer; mediated via the coiled-coil region. Interacts with NORE1, which inhibits autoactivation. Interacts with and stabilizes SAV1. Interacts with RASSF1. Interacts with FOXO3. Interacts with RASSF2 (via SARAH domain). Interacts with AR, PKB/AKT1, TNNI3 and SIRT1. Interacts with DLG5 (via PDZ domain 3). Interacts with MARK3 and SCRIB in the presence of DLG5. The cofactor is Mg(2+). Post-translationally, autophosphorylated on serine and threonine residues. Phosphorylation at Thr-387 by PKB/AKT1, leads to inhibition of its: kinase activity, nuclear translocation and autophosphorylation at Thr-183. It also diminishes its cleavage by caspases and its ability to phosphorylate FOXO3. In terms of processing, proteolytically cleaved by caspase-3 during apoptosis at Asp-326 and Asp-349 resulting in a 37 kDa or a 39 kDa subunit respectively. The 39 kDa subunit is further cleaved into the 37 kDa form. Proteolytic cleavage results in kinase activation and nuclear translocation of the truncated form (MST1/N). It is less likely that cleavage at Asp-349 is a prerequisite for activation as this site is not conserved in the murine ortholog.

The protein resides in the cytoplasm. It localises to the nucleus. It carries out the reaction L-seryl-[protein] + ATP = O-phospho-L-seryl-[protein] + ADP + H(+). It catalyses the reaction L-threonyl-[protein] + ATP = O-phospho-L-threonyl-[protein] + ADP + H(+). Its activity is regulated as follows. Inhibited by the C-terminal non-catalytic region. Activated by caspase-cleavage. Full activation also requires homodimerization and autophosphorylation of Thr-183. Activated by RASSF1 which acts by preventing its dephosphorylation. Its function is as follows. Stress-activated, pro-apoptotic kinase which, following caspase-cleavage, enters the nucleus and induces chromatin condensation followed by internucleosomal DNA fragmentation. Key component of the Hippo signaling pathway which plays a pivotal role in organ size control and tumor suppression by restricting proliferation and promoting apoptosis. The core of this pathway is composed of a kinase cascade wherein STK3/MST2 and STK4/MST1, in complex with its regulatory protein SAV1, phosphorylates and activates LATS1/2 in complex with its regulatory protein MOB1, which in turn phosphorylates and inactivates YAP1 oncoprotein and WWTR1/TAZ. Phosphorylation of YAP1 by LATS2 inhibits its translocation into the nucleus to regulate cellular genes important for cell proliferation, cell death, and cell migration. STK3/MST2 and STK4/MST1 are required to repress proliferation of mature hepatocytes, to prevent activation of facultative adult liver stem cells (oval cells), and to inhibit tumor formation. Phosphorylates 'Ser-14' of histone H2B (H2BS14ph) during apoptosis. Phosphorylates FOXO3 upon oxidative stress, which results in its nuclear translocation and cell death initiation. Phosphorylates MOBKL1A, MOBKL1B and RASSF2. Phosphorylates TNNI3 (cardiac Tn-I) and alters its binding affinity to TNNC1 (cardiac Tn-C) and TNNT2 (cardiac Tn-T). Phosphorylates FOXO1 on 'Ser-212' and regulates its activation and stimulates transcription of PMAIP1 in a FOXO1-dependent manner. Phosphorylates SIRT1 and inhibits SIRT1-mediated p53/TP53 deacetylation, thereby promoting p53/TP53 dependent transcription and apoptosis upon DNA damage. Acts as an inhibitor of PKB/AKT1. Phosphorylates AR on 'Ser-650' and suppresses its activity by intersecting with PKB/AKT1 signaling and antagonizing formation of AR-chromatin complexes. This Macaca mulatta (Rhesus macaque) protein is Serine/threonine-protein kinase 4 (STK4).